Reading from the N-terminus, the 356-residue chain is tRNA N6-adenosine threonylcarbamoyltransferase (356 aa).

Fe cation is bound by residues His-115 and His-119. Substrate is bound by residues 138–142 (LVSGG), Asp-171, Gly-184, and Asn-283. Asp-311 contacts Fe cation.

Belongs to the KAE1 / TsaD family. The cofactor is Fe(2+).

Its subcellular location is the cytoplasm. It carries out the reaction L-threonylcarbamoyladenylate + adenosine(37) in tRNA = N(6)-L-threonylcarbamoyladenosine(37) in tRNA + AMP + H(+). Required for the formation of a threonylcarbamoyl group on adenosine at position 37 (t(6)A37) in tRNAs that read codons beginning with adenine. Is involved in the transfer of the threonylcarbamoyl moiety of threonylcarbamoyl-AMP (TC-AMP) to the N6 group of A37, together with TsaE and TsaB. TsaD likely plays a direct catalytic role in this reaction. The chain is tRNA N6-adenosine threonylcarbamoyltransferase from Prochlorococcus marinus (strain MIT 9312).